The chain runs to 120 residues: Large ribosomal subunit protein bL19c (120 aa).

It belongs to the bacterial ribosomal protein bL19 family.

It localises to the plastid. The protein localises to the chloroplast. The protein is Large ribosomal subunit protein bL19c (rpl19) of Trieres chinensis (Marine centric diatom).